The following is a 58-amino-acid chain: UPF0391 membrane protein COXBURSA331_A2131 (58 aa).

2 helical membrane-spanning segments follow: residues 3 to 23 and 30 to 50; these read FWVL…FTGI and IAKI…IAML.

This sequence belongs to the UPF0391 family.

The protein localises to the cell membrane. The protein is UPF0391 membrane protein COXBURSA331_A2131 of Coxiella burnetii (strain RSA 331 / Henzerling II).